The sequence spans 338 residues: Glyceraldehyde-3-phosphate dehydrogenase (338 aa).

Residues 11 to 12 and Gly-111 contribute to the NAD(+) site; that span reads TI. 140 to 142 provides a ligand contact to D-glyceraldehyde 3-phosphate; it reads SCN. The Nucleophile role is filled by Cys-141. Arg-169 is an NAD(+) binding site. Residues 170–195 form a disordered region; the sequence is GSDPSEVKKGPINSIVPNPPKVPSHH. 195 to 196 provides a ligand contact to D-glyceraldehyde 3-phosphate; that stretch reads HG. Gln-302 is a binding site for NAD(+).

Belongs to the glyceraldehyde-3-phosphate dehydrogenase family. In terms of assembly, homotetramer.

It is found in the cytoplasm. It carries out the reaction D-glyceraldehyde 3-phosphate + phosphate + NADP(+) = (2R)-3-phospho-glyceroyl phosphate + NADPH + H(+). The enzyme catalyses D-glyceraldehyde 3-phosphate + phosphate + NAD(+) = (2R)-3-phospho-glyceroyl phosphate + NADH + H(+). It functions in the pathway carbohydrate degradation; glycolysis; pyruvate from D-glyceraldehyde 3-phosphate: step 1/5. This Methanobrevibacter smithii (strain ATCC 35061 / DSM 861 / OCM 144 / PS) protein is Glyceraldehyde-3-phosphate dehydrogenase.